Here is an 82-residue protein sequence, read N- to C-terminus: Acyl carrier protein (82 aa).

Residues 4-79 enclose the Carrier domain; the sequence is PEMEARLKQI…DALNYIEQKL (76 aa). The residue at position 39 (Ser39) is an O-(pantetheine 4'-phosphoryl)serine.

The protein belongs to the acyl carrier protein (ACP) family. In terms of processing, 4'-phosphopantetheine is transferred from CoA to a specific serine of apo-ACP by AcpS. This modification is essential for activity because fatty acids are bound in thioester linkage to the sulfhydryl of the prosthetic group.

The protein resides in the cytoplasm. Its pathway is lipid metabolism; fatty acid biosynthesis. Its function is as follows. Carrier of the growing fatty acid chain in fatty acid biosynthesis. The polypeptide is Acyl carrier protein (Roseiflexus castenholzii (strain DSM 13941 / HLO8)).